A 307-amino-acid chain; its full sequence is 4-hydroxy-3-methylbut-2-enyl diphosphate reductase (307 aa).

C13 contributes to the [4Fe-4S] cluster binding site. (2E)-4-hydroxy-3-methylbut-2-enyl diphosphate-binding residues include H42 and H75. Dimethylallyl diphosphate-binding residues include H42 and H75. The isopentenyl diphosphate site is built by H42 and H75. C97 lines the [4Fe-4S] cluster pocket. H125 serves as a coordination point for (2E)-4-hydroxy-3-methylbut-2-enyl diphosphate. Dimethylallyl diphosphate is bound at residue H125. H125 serves as a coordination point for isopentenyl diphosphate. E127 acts as the Proton donor in catalysis. T165 is a (2E)-4-hydroxy-3-methylbut-2-enyl diphosphate binding site. C195 provides a ligand contact to [4Fe-4S] cluster. (2E)-4-hydroxy-3-methylbut-2-enyl diphosphate-binding residues include S223, S224, N225, and S267. 4 residues coordinate dimethylallyl diphosphate: S223, S224, N225, and S267. Residues S223, S224, N225, and S267 each contribute to the isopentenyl diphosphate site.

The protein belongs to the IspH family. [4Fe-4S] cluster is required as a cofactor.

The enzyme catalyses isopentenyl diphosphate + 2 oxidized [2Fe-2S]-[ferredoxin] + H2O = (2E)-4-hydroxy-3-methylbut-2-enyl diphosphate + 2 reduced [2Fe-2S]-[ferredoxin] + 2 H(+). It catalyses the reaction dimethylallyl diphosphate + 2 oxidized [2Fe-2S]-[ferredoxin] + H2O = (2E)-4-hydroxy-3-methylbut-2-enyl diphosphate + 2 reduced [2Fe-2S]-[ferredoxin] + 2 H(+). It functions in the pathway isoprenoid biosynthesis; dimethylallyl diphosphate biosynthesis; dimethylallyl diphosphate from (2E)-4-hydroxy-3-methylbutenyl diphosphate: step 1/1. Its pathway is isoprenoid biosynthesis; isopentenyl diphosphate biosynthesis via DXP pathway; isopentenyl diphosphate from 1-deoxy-D-xylulose 5-phosphate: step 6/6. Its function is as follows. Catalyzes the conversion of 1-hydroxy-2-methyl-2-(E)-butenyl 4-diphosphate (HMBPP) into a mixture of isopentenyl diphosphate (IPP) and dimethylallyl diphosphate (DMAPP). Acts in the terminal step of the DOXP/MEP pathway for isoprenoid precursor biosynthesis. The protein is 4-hydroxy-3-methylbut-2-enyl diphosphate reductase of Chlamydia trachomatis serovar L2b (strain UCH-1/proctitis).